A 78-amino-acid polypeptide reads, in one-letter code: Putative DPH3 homolog B (78 aa).

The 57-residue stretch at 4–60 (FHDEVEIEDFQYDEDSETYFCPCPCGDNFSITKEELENGEGVAMCPGCSLIIKVIYD) folds into the DPH-type MB domain. Residues Cys-26, Cys-28, Cys-48, and Cys-51 each coordinate Zn(2+).

Belongs to the DPH3 family.

The protein is Putative DPH3 homolog B (DPH3P1) of Homo sapiens (Human).